The chain runs to 321 residues: Tetraacyldisaccharide 4'-kinase (321 aa).

Position 54–61 (54–61 (SVGGTGKT)) interacts with ATP.

It belongs to the LpxK family.

It carries out the reaction a lipid A disaccharide + ATP = a lipid IVA + ADP + H(+). Its pathway is glycolipid biosynthesis; lipid IV(A) biosynthesis; lipid IV(A) from (3R)-3-hydroxytetradecanoyl-[acyl-carrier-protein] and UDP-N-acetyl-alpha-D-glucosamine: step 6/6. Transfers the gamma-phosphate of ATP to the 4'-position of a tetraacyldisaccharide 1-phosphate intermediate (termed DS-1-P) to form tetraacyldisaccharide 1,4'-bis-phosphate (lipid IVA). The protein is Tetraacyldisaccharide 4'-kinase of Rickettsia conorii (strain ATCC VR-613 / Malish 7).